The primary structure comprises 276 residues: Bifunctional protein FolD (276 aa).

Residues 157-159 (NRS), serine 182, and isoleucine 223 each bind NADP(+).

The protein belongs to the tetrahydrofolate dehydrogenase/cyclohydrolase family. As to quaternary structure, homodimer.

It catalyses the reaction (6R)-5,10-methylene-5,6,7,8-tetrahydrofolate + NADP(+) = (6R)-5,10-methenyltetrahydrofolate + NADPH. The enzyme catalyses (6R)-5,10-methenyltetrahydrofolate + H2O = (6R)-10-formyltetrahydrofolate + H(+). It functions in the pathway one-carbon metabolism; tetrahydrofolate interconversion. Its function is as follows. Catalyzes the oxidation of 5,10-methylenetetrahydrofolate to 5,10-methenyltetrahydrofolate and then the hydrolysis of 5,10-methenyltetrahydrofolate to 10-formyltetrahydrofolate. The polypeptide is Bifunctional protein FolD (Thermoplasma acidophilum (strain ATCC 25905 / DSM 1728 / JCM 9062 / NBRC 15155 / AMRC-C165)).